Here is a 295-residue protein sequence, read N- to C-terminus: Glycine N-acyltransferase-like protein Keg1 (295 aa).

Position 41 is an N6-acetyllysine; alternate (Lys-41). At Lys-41 the chain carries N6-succinyllysine; alternate. Lys-43 bears the N6-acetyllysine mark. Lys-48 bears the N6-acetyllysine; alternate mark. Lys-48 is subject to N6-succinyllysine; alternate. Residues Lys-80 and Lys-83 each carry the N6-acetyllysine modification. N6-acetyllysine; alternate occurs at positions 124, 128, and 140. 3 positions are modified to N6-succinyllysine; alternate: Lys-124, Lys-128, and Lys-140. N6-acetyllysine is present on Lys-150. Lys-255 is subject to N6-acetyllysine; alternate. Residue Lys-255 is modified to N6-succinyllysine; alternate.

The protein belongs to the glycine N-acyltransferase family. In terms of assembly, binds to microtubules.

It localises to the cytoplasm. The protein resides in the cytoskeleton. It is found in the microtubule organizing center. The protein localises to the centrosome. The catalysed reaction is an acyl-CoA + glycine = an N-acylglycine + CoA + H(+). Functionally, acyltransferase which transfers the acyl group to the N-terminus of glycine. Can conjugate a multitude of substrates to form a variety of N-acylglycines. The protein is Glycine N-acyltransferase-like protein Keg1 (Keg1) of Mus musculus (Mouse).